The chain runs to 314 residues: Methionyl-tRNA formyltransferase (314 aa).

Residue 108–111 (SLLP) coordinates (6S)-5,6,7,8-tetrahydrofolate.

Belongs to the Fmt family.

It carries out the reaction L-methionyl-tRNA(fMet) + (6R)-10-formyltetrahydrofolate = N-formyl-L-methionyl-tRNA(fMet) + (6S)-5,6,7,8-tetrahydrofolate + H(+). Functionally, attaches a formyl group to the free amino group of methionyl-tRNA(fMet). The formyl group appears to play a dual role in the initiator identity of N-formylmethionyl-tRNA by promoting its recognition by IF2 and preventing the misappropriation of this tRNA by the elongation apparatus. This is Methionyl-tRNA formyltransferase from Akkermansia muciniphila (strain ATCC BAA-835 / DSM 22959 / JCM 33894 / BCRC 81048 / CCUG 64013 / CIP 107961 / Muc).